The chain runs to 338 residues: Adenylosuccinate synthetase (338 aa).

GTP contacts are provided by residues 12–18 and 42–44; these read GDEGKGK and GHT. Aspartate 13 functions as the Proton acceptor in the catalytic mechanism. Aspartate 13 and glycine 42 together coordinate Mg(2+). IMP-binding positions include 13–16, 40–43, threonine 127, arginine 141, glutamine 179, threonine 194, and arginine 256; these read DEGK and NAGH. Histidine 43 functions as the Proton donor in the catalytic mechanism. 252-258 provides a ligand contact to substrate; it reads TVTGRRR. Residues arginine 258, 284-286, and 324-326 each bind GTP; these read CLD and STG.

This sequence belongs to the adenylosuccinate synthetase family. As to quaternary structure, homodimer. Mg(2+) serves as cofactor.

The protein resides in the cytoplasm. The catalysed reaction is IMP + L-aspartate + GTP = N(6)-(1,2-dicarboxyethyl)-AMP + GDP + phosphate + 2 H(+). Its pathway is purine metabolism; AMP biosynthesis via de novo pathway; AMP from IMP: step 1/2. Functionally, plays an important role in the de novo pathway of purine nucleotide biosynthesis. Catalyzes the first committed step in the biosynthesis of AMP from IMP. The sequence is that of Adenylosuccinate synthetase from Methanococcus maripaludis (strain DSM 14266 / JCM 13030 / NBRC 101832 / S2 / LL).